We begin with the raw amino-acid sequence, 237 residues long: Proteasome subunit alpha type-5-A (237 aa).

N-acetylmethionine is present on methionine 1. Glycyl lysine isopeptide (Lys-Gly) (interchain with G-Cter in ubiquitin) cross-links involve residues lysine 43 and lysine 66.

Belongs to the peptidase T1A family. In terms of assembly, component of the 20S core complex of the 26S proteasome. The 26S proteasome is composed of a core protease (CP), known as the 20S proteasome, capped at one or both ends by the 19S regulatory particle (RP/PA700). The 20S proteasome core is composed of 28 subunits that are arranged in four stacked rings, resulting in a barrel-shaped structure. The two end rings are each formed by seven alpha subunits, and the two central rings are each formed by seven beta subunits. The catalytic chamber with the active sites is on the inside of the barrel.

Its subcellular location is the cytoplasm. The protein resides in the nucleus. Its function is as follows. The proteasome is a multicatalytic proteinase complex which is characterized by its ability to cleave peptides with Arg, Phe, Tyr, Leu, and Glu adjacent to the leaving group at neutral or slightly basic pH. The proteasome has an ATP-dependent proteolytic activity. The polypeptide is Proteasome subunit alpha type-5-A (PAE1) (Arabidopsis thaliana (Mouse-ear cress)).